The chain runs to 280 residues: MNILITALEQSLIMLPLILGMYISYRILKITDLTVDGTYVLGAAVFARTIPFGLFHALIFAIIAGGINGSIVSFMQRNKRINGLIAGILANFMLYSVNLQIMQRPNISVLGMPTLLSILDLDNWLVPLILINSFIIVIVLILLKGNLGLFLRAFGFNKDLLIDLGKPAELYRMLGLSISNGLAALTGTLSAQVNGFADINMGYGVALVGIGAIIIGRQIFLNNINNFNALKEIFACFIGILFYFISLSILLHIGIDPINLKLILGIVLFISLSSVKREDL.

6 helical membrane passes run 3 to 23, 52 to 72, 81 to 101, 123 to 143, 196 to 216, and 233 to 253; these read ILITALEQSLIMLPLILGMYI, FGLFHALIFAIIAGGINGSIV, INGLIAGILANFMLYSVNLQI, NWLVPLILINSFIIVIVLILL, FADINMGYGVALVGIGAIIIG, and IFACFIGILFYFISLSILLHI.

It is found in the cell membrane. This is an uncharacterized protein from Rickettsia prowazekii (strain Madrid E).